A 288-amino-acid chain; its full sequence is Quinate/shikimate dehydrogenase (288 aa).

Positions 71 and 107 each coordinate substrate. NAD(+) is bound by residues 132–135 (AGGA), 155–158 (NRRD), Lys-205, 232–235 (CVYN), and Gly-255.

The protein belongs to the shikimate dehydrogenase family. Homodimer.

It carries out the reaction L-quinate + NAD(+) = 3-dehydroquinate + NADH + H(+). It catalyses the reaction L-quinate + NADP(+) = 3-dehydroquinate + NADPH + H(+). The enzyme catalyses shikimate + NADP(+) = 3-dehydroshikimate + NADPH + H(+). The catalysed reaction is shikimate + NAD(+) = 3-dehydroshikimate + NADH + H(+). Its pathway is metabolic intermediate biosynthesis; chorismate biosynthesis; chorismate from D-erythrose 4-phosphate and phosphoenolpyruvate: step 4/7. Its function is as follows. The actual biological function of YdiB remains unclear, nor is it known whether 3-dehydroshikimate or quinate represents the natural substrate. Catalyzes the reversible NAD-dependent reduction of both 3-dehydroshikimate (DHSA) and 3-dehydroquinate to yield shikimate (SA) and quinate, respectively. It can use both NAD or NADP for catalysis, however it has higher catalytic efficiency with NAD. This chain is Quinate/shikimate dehydrogenase, found in Escherichia coli O1:K1 / APEC.